We begin with the raw amino-acid sequence, 358 residues long: Phosphate acyltransferase (358 aa).

The interval 336–358 (SAAGAAPASPETAPTPHPSTRAA) is disordered.

Belongs to the PlsX family. Homodimer. Probably interacts with PlsY.

It is found in the cytoplasm. It catalyses the reaction a fatty acyl-[ACP] + phosphate = an acyl phosphate + holo-[ACP]. The protein operates within lipid metabolism; phospholipid metabolism. Catalyzes the reversible formation of acyl-phosphate (acyl-PO(4)) from acyl-[acyl-carrier-protein] (acyl-ACP). This enzyme utilizes acyl-ACP as fatty acyl donor, but not acyl-CoA. The chain is Phosphate acyltransferase from Cupriavidus pinatubonensis (strain JMP 134 / LMG 1197) (Cupriavidus necator (strain JMP 134)).